A 209-amino-acid polypeptide reads, in one-letter code: Kynurenine formamidase (209 aa).

Trp20 provides a ligand contact to substrate. His50, His54, and Asp56 together coordinate Zn(2+). His60 serves as the catalytic Proton donor/acceptor. Positions 161 and 173 each coordinate Zn(2+).

It belongs to the Cyclase 1 superfamily. KynB family. Homodimer. Zn(2+) serves as cofactor.

It catalyses the reaction N-formyl-L-kynurenine + H2O = L-kynurenine + formate + H(+). The protein operates within amino-acid degradation; L-tryptophan degradation via kynurenine pathway; L-kynurenine from L-tryptophan: step 2/2. Functionally, catalyzes the hydrolysis of N-formyl-L-kynurenine to L-kynurenine, the second step in the kynurenine pathway of tryptophan degradation. In Bacillus thuringiensis (strain Al Hakam), this protein is Kynurenine formamidase.